Reading from the N-terminus, the 260-residue chain is Methionine-rich nacre protein (260 aa).

The first 19 residues, 1-19 (MRRILCLAVVIFIINDVSS), serve as a signal peptide directing secretion. The interval 23 to 75 (GSNKNWKKSGMSLSSPGNKKPTGNNNAVPQKSKMNNVNQNSLSQPKRPSHPGN) is disordered. The span at 33–68 (MSLSSPGNKKPTGNNNAVPQKSKMNNVNQNSLSQPK) shows a compositional bias: polar residues.

As to expression, expressed in mantle distal zone, mantle margin and grafted pearl pockets. Not expressed in adductor muscle, gills, hemocytes or ungrafted pearl pockets. Within the mantle, specifically expressed in mineralizing outer epithelium cells (at protein level). After secretion incorporated into acid-insoluble nacre matrix of shell and pearl (at protein level). Not found in acid-insoluble matrix of shell prisms (at protein level).

The protein resides in the secreted. In Margaritifera margaritifera (Freshwater pearl mussel), this protein is Methionine-rich nacre protein.